Reading from the N-terminus, the 198-residue chain is Na(+)-translocating NADH-quinone reductase subunit E (198 aa).

6 consecutive transmembrane segments (helical) span residues 11-31 (AVFVENMALAFFLGMCTFLAV), 35-55 (VSTAFGLGIAVTVVLGISVPA), 77-97 (FLNFITFIGVIAAIVQVLEMI), 109-129 (LGIFLPLITVNCAIFGGVSFM), 140-160 (IVYGFGSGMGWMLAIVALAGI), and 176-196 (LGITFISTGLMALGFMSFAGV).

This sequence belongs to the NqrDE/RnfAE family. In terms of assembly, composed of six subunits; NqrA, NqrB, NqrC, NqrD, NqrE and NqrF.

It is found in the cell inner membrane. It carries out the reaction a ubiquinone + n Na(+)(in) + NADH + H(+) = a ubiquinol + n Na(+)(out) + NAD(+). Its function is as follows. NQR complex catalyzes the reduction of ubiquinone-1 to ubiquinol by two successive reactions, coupled with the transport of Na(+) ions from the cytoplasm to the periplasm. NqrA to NqrE are probably involved in the second step, the conversion of ubisemiquinone to ubiquinol. The polypeptide is Na(+)-translocating NADH-quinone reductase subunit E (Yersinia pestis bv. Antiqua (strain Nepal516)).